Consider the following 334-residue polypeptide: Lipoyl synthase (334 aa).

Positions 8-33 (LNNDTRPKVEAPARPRHPEKAHRPDT) are disordered. Residues 12 to 33 (TRPKVEAPARPRHPEKAHRPDT) are compositionally biased toward basic and acidic residues. Residues Cys68, Cys73, Cys79, Cys94, Cys98, Cys101, and Ser307 each contribute to the [4Fe-4S] cluster site. Residues 80-296 (WEKRHATFMI…ETTAYAKGFL (217 aa)) form the Radical SAM core domain.

It belongs to the radical SAM superfamily. Lipoyl synthase family. Requires [4Fe-4S] cluster as cofactor.

It is found in the cytoplasm. It carries out the reaction [[Fe-S] cluster scaffold protein carrying a second [4Fe-4S](2+) cluster] + N(6)-octanoyl-L-lysyl-[protein] + 2 oxidized [2Fe-2S]-[ferredoxin] + 2 S-adenosyl-L-methionine + 4 H(+) = [[Fe-S] cluster scaffold protein] + N(6)-[(R)-dihydrolipoyl]-L-lysyl-[protein] + 4 Fe(3+) + 2 hydrogen sulfide + 2 5'-deoxyadenosine + 2 L-methionine + 2 reduced [2Fe-2S]-[ferredoxin]. It functions in the pathway protein modification; protein lipoylation via endogenous pathway; protein N(6)-(lipoyl)lysine from octanoyl-[acyl-carrier-protein]: step 2/2. In terms of biological role, catalyzes the radical-mediated insertion of two sulfur atoms into the C-6 and C-8 positions of the octanoyl moiety bound to the lipoyl domains of lipoate-dependent enzymes, thereby converting the octanoylated domains into lipoylated derivatives. The polypeptide is Lipoyl synthase (Methylorubrum populi (strain ATCC BAA-705 / NCIMB 13946 / BJ001) (Methylobacterium populi)).